Reading from the N-terminus, the 295-residue chain is UDP-N-acetylenolpyruvoylglucosamine reductase (295 aa).

Positions 24 to 188 constitute an FAD-binding PCMH-type domain; sequence KVGGNAEIFF…LKAVFKINKG (165 aa). Residue R168 is part of the active site. S217 acts as the Proton donor in catalysis. E287 is an active-site residue.

Belongs to the MurB family. FAD serves as cofactor.

The protein resides in the cytoplasm. The enzyme catalyses UDP-N-acetyl-alpha-D-muramate + NADP(+) = UDP-N-acetyl-3-O-(1-carboxyvinyl)-alpha-D-glucosamine + NADPH + H(+). It functions in the pathway cell wall biogenesis; peptidoglycan biosynthesis. Cell wall formation. The chain is UDP-N-acetylenolpyruvoylglucosamine reductase from Rickettsia massiliae (strain Mtu5).